Reading from the N-terminus, the 1324-residue chain is Myotubularin-related protein DDB_G0290005 (1324 aa).

The interval 140–276 (KYHDNTTPNN…TSSTNGNCST (137 aa)) is disordered. The segment covering 144–180 (NTTPNNNNNNNNNNNNNNNNTNNNNNNNINKSNNSST) has biased composition (low complexity). The span at 181–194 (DQLNSFSLEKQPSQ) shows a compositional bias: polar residues. Over residues 195–222 (NENLNNNNNNNNNNNNGNNNINNNNLMN) the composition is skewed to low complexity. Polar residues predominate over residues 223–247 (SLTQPSTSSRSRLLKSNSTPINLNE). Residues 248–276 (SSTSTNSPTLSSTTTTTTTTSSTNGNCST) show a composition bias toward low complexity. One can recognise a Myotubularin phosphatase domain in the interval 349–807 (GWLFYDPIEE…KGVQLWSDYF (459 aa)). Residues 514 to 515 (NI), 575 to 581 (CIDGWDR), and R621 contribute to the substrate site. The Phosphocysteine intermediate role is filled by C575. 5 disordered regions span residues 624–664 (QSIS…TTTS), 841–1043 (QKKK…QQQE), 1066–1110 (EQQE…QQQT), 1144–1213 (RKQE…LTMP), and 1232–1296 (LHPN…DNTS). 2 stretches are compositionally biased toward low complexity: residues 625 to 664 (SISSTSTTTTNSSSNGQLTSSSSNTSISSNATTTTTTTTS) and 852 to 864 (GASGSSSGSSGSS). Positions 865–882 (SKHHHHHHHHHHHHHHRK) are enriched in basic residues. The span at 883-894 (STDEKDSKEKSS) shows a compositional bias: basic and acidic residues. Composition is skewed to low complexity over residues 899-914 (SRTSSSSKRKSLSTSS) and 927-973 (TITT…TTTP). Residues 988–1002 (DKLKSPSGDDIKQEQ) show a composition bias toward basic and acidic residues. Over residues 1005 to 1024 (MNQFTSQHPNNQMESSSEIN) the composition is skewed to polar residues. Residues 1020-1195 (SSEINQQNEQ…LEQQKPKADI (176 aa)) adopt a coiled-coil conformation. Positions 1025–1043 (QQNEQSQLEQQQEQQQQQE) are enriched in low complexity. Over residues 1079–1090 (PNETITYSMESD) the composition is skewed to polar residues. The segment covering 1091–1109 (SQSSISQNQNQLQQQQQQQ) has biased composition (low complexity). Positions 1144–1193 (RKQEKEKRKLEKEKKQKERAERKLEKEKKRDQKEREQKEKELLEQQKPKA) are enriched in basic and acidic residues. A compositionally biased stretch (polar residues) spans 1234-1243 (PNLSDQNSQT). 2 stretches are compositionally biased toward low complexity: residues 1244–1258 (NSSGDNSGNVNNSPN) and 1265–1294 (SNLSNNNNNNNNSNENSNNNNNNNNNNNDN).

This sequence belongs to the protein-tyrosine phosphatase family. Non-receptor class myotubularin subfamily.

It is found in the cytoplasm. Its function is as follows. Phosphatase that acts on lipids with a phosphoinositol headgroup. The sequence is that of Myotubularin-related protein DDB_G0290005 from Dictyostelium discoideum (Social amoeba).